A 187-amino-acid polypeptide reads, in one-letter code: Pyridoxal 5'-phosphate synthase subunit PdxT (187 aa).

47 to 49 (GES) serves as a coordination point for L-glutamine. Cysteine 76 (nucleophile) is an active-site residue. Residues arginine 102 and 128-129 (IR) contribute to the L-glutamine site. Active-site charge relay system residues include histidine 165 and glutamate 167.

Belongs to the glutaminase PdxT/SNO family. In the presence of PdxS, forms a dodecamer of heterodimers. Only shows activity in the heterodimer.

It catalyses the reaction aldehydo-D-ribose 5-phosphate + D-glyceraldehyde 3-phosphate + L-glutamine = pyridoxal 5'-phosphate + L-glutamate + phosphate + 3 H2O + H(+). The catalysed reaction is L-glutamine + H2O = L-glutamate + NH4(+). Its pathway is cofactor biosynthesis; pyridoxal 5'-phosphate biosynthesis. Functionally, catalyzes the hydrolysis of glutamine to glutamate and ammonia as part of the biosynthesis of pyridoxal 5'-phosphate. The resulting ammonia molecule is channeled to the active site of PdxS. This chain is Pyridoxal 5'-phosphate synthase subunit PdxT, found in Methanococcus maripaludis (strain C7 / ATCC BAA-1331).